Reading from the N-terminus, the 383-residue chain is Processive diacylglycerol beta-glucosyltransferase (383 aa).

It belongs to the glycosyltransferase 28 family. UgtP subfamily.

The protein resides in the cell membrane. The enzyme catalyses a 1,2-diacyl-3-O-(beta-D-glucopyranosyl)-sn-glycerol + UDP-alpha-D-glucose = a 1,2-diacyl-3-O-(beta-D-Glc-(1-&gt;6)-beta-D-Glc)-sn-glycerol + UDP + H(+). The catalysed reaction is a 1,2-diacyl-3-O-(beta-D-Glc-(1-&gt;6)-beta-D-Glc)-sn-glycerol + UDP-alpha-D-glucose = a 1,2-diacyl-3-O-(beta-D-Glc-(1-&gt;6)-beta-D-Glc-(1-&gt;6)-beta-D-Glc)-sn-glycerol + UDP + H(+). It catalyses the reaction a 1,2-diacyl-sn-glycerol + UDP-alpha-D-glucose = a 1,2-diacyl-3-O-(beta-D-glucopyranosyl)-sn-glycerol + UDP + H(+). The protein operates within glycolipid metabolism; diglucosyl-diacylglycerol biosynthesis. Processive glucosyltransferase involved in the biosynthesis of both the bilayer- and non-bilayer-forming membrane glucolipids. Is able to successively transfer up to three glucosyl residues to diacylglycerol (DAG), thereby catalyzing the formation of beta-monoglucosyl-DAG (3-O-(beta-D-glucopyranosyl)-1,2-diacyl-sn-glycerol), beta-diglucosyl-DAG (3-O-(beta-D-glucopyranosyl-beta-(1-&gt;6)-D-glucopyranosyl)-1,2-diacyl-sn-glycerol) and beta-triglucosyl-DAG (3-O-(beta-D-glucopyranosyl-beta-(1-&gt;6)-D-glucopyranosyl-beta-(1-&gt;6)-D-glucopyranosyl)-1,2-diacyl-sn-glycerol). Beta-diglucosyl-DAG is the predominant glycolipid found in Bacillales and is also used as a membrane anchor for lipoteichoic acid (LTA). This is Processive diacylglycerol beta-glucosyltransferase from Bacillus pumilus (strain SAFR-032).